The following is a 308-amino-acid chain: Putative lipid kinase SH2167 (308 aa).

Residues 1–139 (MGQKFNHGVL…YDVMKVNGTY (139 aa)) form the DAGKc domain. Residues Ser44, 74–80 (GDGTVNE), and Thr101 each bind ATP. Mg(2+) is bound by residues Ser220, Asp223, and Lys225. Glu281 acts as the Proton acceptor in catalysis.

This sequence belongs to the diacylglycerol/lipid kinase family. Mg(2+) serves as cofactor.

Functionally, may catalyze the ATP-dependent phosphorylation of lipids other than diacylglycerol (DAG). The polypeptide is Putative lipid kinase SH2167 (Staphylococcus haemolyticus (strain JCSC1435)).